A 444-amino-acid polypeptide reads, in one-letter code: Transmembrane protein with metallophosphoesterase domain (444 aa).

The next 5 membrane-spanning stretches (helical) occupy residues 7–27 (LSLG…MIVS), 43–63 (LFRL…SIYI), 87–107 (MVVA…IFLV), 114–134 (FSLV…FLCV), and 162–182 (LALR…VGLL). Positions 214, 216, 246, 277, 382, and 384 each coordinate a divalent metal cation.

The protein belongs to the metallophosphoesterase superfamily. LOC643853 family. A divalent metal cation is required as a cofactor.

The protein localises to the membrane. This chain is Transmembrane protein with metallophosphoesterase domain (TMPPE), found in Bos taurus (Bovine).